Here is a 625-residue protein sequence, read N- to C-terminus: Cytochrome c oxidase subunit 1 (625 aa).

A helical membrane pass occupies residues 23-43; that stretch reads IAIMYLIAGTLFFVKAGVMAL. Residue H69 participates in Fe(II)-heme a binding. 6 helical membrane passes run 72-92, 99-119, 151-171, 195-215, 240-260, and 272-292; these read IMLF…VIPL, VAFP…GLLL, FYVL…INFL, FISS…LALL, IFWI…FGII, and LFGY…GFMV. Residues H246 and Y250 each contribute to the Cu cation site. Positions 246–250 form a cross-link, 1'-histidyl-3'-tyrosine (His-Tyr); it reads HPEVY. 2 residues coordinate Cu cation: H295 and H296. Helical transmembrane passes span 309–329 and 343–363; these read IFAV…FNWL and MLFA…GVML. Heme a3 is bound at residue H381. 5 helical membrane-spanning segments follow: residues 382-402, 417-437, 460-480, 551-571, and 577-597; these read FHYI…FYWY, LFFW…HLLG, ISTI…INVI, SILP…LIML, and IINP…CMFV. Position 383 (H383) interacts with Fe(II)-heme a.

This sequence belongs to the heme-copper respiratory oxidase family.

It localises to the cell membrane. It carries out the reaction 4 Fe(II)-[cytochrome c] + O2 + 8 H(+)(in) = 4 Fe(III)-[cytochrome c] + 2 H2O + 4 H(+)(out). The protein operates within energy metabolism; oxidative phosphorylation. Functionally, cytochrome c oxidase is the component of the respiratory chain that catalyzes the reduction of oxygen to water. Subunits 1-3 form the functional core of the enzyme complex. CO I is the catalytic subunit of the enzyme. Electrons originating in cytochrome c are transferred via the copper A center of subunit 2 and heme A of subunit 1 to the bimetallic center formed by heme A3 and copper B. In Alkalihalophilus pseudofirmus (strain ATCC BAA-2126 / JCM 17055 / OF4) (Bacillus pseudofirmus), this protein is Cytochrome c oxidase subunit 1 (ctaD).